A 102-amino-acid chain; its full sequence is ATP-dependent Clp protease adapter protein ClpS (102 aa).

This sequence belongs to the ClpS family. As to quaternary structure, binds to the N-terminal domain of the chaperone ClpA.

Its function is as follows. Involved in the modulation of the specificity of the ClpAP-mediated ATP-dependent protein degradation. This is ATP-dependent Clp protease adapter protein ClpS from Shewanella oneidensis (strain ATCC 700550 / JCM 31522 / CIP 106686 / LMG 19005 / NCIMB 14063 / MR-1).